The chain runs to 130 residues: Sec-independent protein translocase protein TatB (130 aa).

The helical transmembrane segment at 1 to 21 threads the bilayer; that stretch reads MFDIGFWELVLIFVVGLVVLG. Residues 85 to 130 are disordered; that stretch reads LKQAAQSVNRPYADVSAKNEATSSSSSDATHQTEATKTSAANTKSE. The segment covering 112–130 has biased composition (polar residues); the sequence is DATHQTEATKTSAANTKSE.

The protein belongs to the TatB family. In terms of assembly, the Tat system comprises two distinct complexes: a TatABC complex, containing multiple copies of TatA, TatB and TatC subunits, and a separate TatA complex, containing only TatA subunits. Substrates initially bind to the TatABC complex, which probably triggers association of the separate TatA complex to form the active translocon.

The protein resides in the cell inner membrane. In terms of biological role, part of the twin-arginine translocation (Tat) system that transports large folded proteins containing a characteristic twin-arginine motif in their signal peptide across membranes. Together with TatC, TatB is part of a receptor directly interacting with Tat signal peptides. TatB may form an oligomeric binding site that transiently accommodates folded Tat precursor proteins before their translocation. The polypeptide is Sec-independent protein translocase protein TatB (Vibrio vulnificus (strain CMCP6)).